A 605-amino-acid chain; its full sequence is Translation factor GUF1 homolog, chloroplastic (605 aa).

In terms of domain architecture, tr-type G spans 7-189 (RRIRNFSIIA…RIVQVVPPPR (183 aa)). GTP contacts are provided by residues 16-23 (AHIDHGKS), 82-86 (DTPGH), and 136-139 (NKID).

The protein belongs to the TRAFAC class translation factor GTPase superfamily. Classic translation factor GTPase family. LepA subfamily.

It localises to the plastid. It is found in the chloroplast. It carries out the reaction GTP + H2O = GDP + phosphate + H(+). Promotes chloroplast protein synthesis. May act as a fidelity factor of the translation reaction, by catalyzing a one-codon backward translocation of tRNAs on improperly translocated ribosomes. The polypeptide is Translation factor GUF1 homolog, chloroplastic (Ostreococcus lucimarinus (strain CCE9901)).